We begin with the raw amino-acid sequence, 251 residues long: Triosephosphate isomerase (251 aa).

12 to 14 (NWK) serves as a coordination point for substrate. H99 serves as the catalytic Electrophile. E169 functions as the Proton acceptor in the catalytic mechanism. Substrate is bound by residues G175, S214, and 235–236 (GG).

The protein belongs to the triosephosphate isomerase family. Homodimer.

Its subcellular location is the cytoplasm. It catalyses the reaction D-glyceraldehyde 3-phosphate = dihydroxyacetone phosphate. The protein operates within carbohydrate biosynthesis; gluconeogenesis. It participates in carbohydrate degradation; glycolysis; D-glyceraldehyde 3-phosphate from glycerone phosphate: step 1/1. Its function is as follows. Involved in the gluconeogenesis. Catalyzes stereospecifically the conversion of dihydroxyacetone phosphate (DHAP) to D-glyceraldehyde-3-phosphate (G3P). The chain is Triosephosphate isomerase from Bradyrhizobium sp. (strain BTAi1 / ATCC BAA-1182).